A 244-amino-acid chain; its full sequence is Thiol S-methyltransferase TMT1A (244 aa).

The segment at 1 to 28 (MELTIFILRLAIYILTFPLYLLNFLGLW) is targeting to lipid droplets. The N-terminal stretch at 1-29 (MELTIFILRLAIYILTFPLYLLNFLGLWS) is a signal peptide.

It belongs to the methyltransferase superfamily. (Microbial infection) Interacts with HCV non-structural protein 4B/NS4B (via C-terminal region); this interaction may promote the recruitment of NS4B in the proximity of lipid droplet. In terms of assembly, self-associates. Interacts with SNRNP200; this interaction may promote the odontogenic differentiation. In terms of processing, methylated at lysine residues most likely by EZH2. As to expression, expressed in the liver.

It localises to the lipid droplet. The protein localises to the endoplasmic reticulum. It is found in the membrane. The protein resides in the microsome. Its subcellular location is the cytoplasm. It localises to the cytosol. It carries out the reaction a thiol + S-adenosyl-L-methionine = a methyl thioether + S-adenosyl-L-homocysteine + H(+). The enzyme catalyses an adenosine in mRNA + S-adenosyl-L-methionine = an N(6)-methyladenosine in mRNA + S-adenosyl-L-homocysteine + H(+). Its activity is regulated as follows. Inhibited by 2,3-dichloro-alpha-methylbenzylamine (DCMB). Thiol S-methyltransferase that catalyzes the transfer of a methyl group from S-adenosyl-L-methionine to alkyl and phenolic thiol-containing acceptor substrates. Together with TMT1B accounts for most of S-thiol methylation activity in the endoplasmic reticulum of hepatocytes. Able to methylate the N6 position of adenosine residues in long non-coding RNAs (lncRNAs). May facilitate lncRNAs transfer into exosomes at the tumor-stroma interface. Promotes osteogenic and odontogenic differentiation by regulating the expression of genes involved in stem cell differentiation and survival. Targeted from the endoplasmic reticulum to lipid droplets, where it recruits cellular proteins to form functional organelles. In terms of biological role, (Microbial infection) May be involved in the assembly and release stages of hepatitis C virus (HCV) life cycle and thus play a crucial role in HCV propagation. The sequence is that of Thiol S-methyltransferase TMT1A from Homo sapiens (Human).